A 218-amino-acid polypeptide reads, in one-letter code: Uracil-DNA glycosylase (218 aa).

The active-site Proton acceptor is Asp-68.

It belongs to the uracil-DNA glycosylase (UDG) superfamily. UNG family. As to quaternary structure, homodimer. Interacts with protein OPG148. Component of the Uracil-DNA glycosylase(UDG)-OPG148-polymerase complex; OPG148 and UDG form a heterodimeric processivity factor that associates with OPG71 to form the processive polymerase holoenzyme.

The catalysed reaction is Hydrolyzes single-stranded DNA or mismatched double-stranded DNA and polynucleotides, releasing free uracil.. Plays an essential role in viral replication as a component of the DNA polymerase processivity factor. Excises uracil residues from the DNA which can arise as a result of misincorporation of dUMP residues by DNA polymerase or due to deamination of cytosine. The sequence is that of Uracil-DNA glycosylase (OPG116) from Bos taurus (Bovine).